The sequence spans 382 residues: Mannitol-1-phosphate 5-dehydrogenase (382 aa).

3-14 (ALHFGAGNIGRG) is an NAD(+) binding site. Lysine 269 bears the N6-acetyllysine mark.

It belongs to the mannitol dehydrogenase family.

The catalysed reaction is D-mannitol 1-phosphate + NAD(+) = beta-D-fructose 6-phosphate + NADH + H(+). This Escherichia coli O9:H4 (strain HS) protein is Mannitol-1-phosphate 5-dehydrogenase.